Consider the following 1206-residue polypeptide: Cilia- and flagella-associated protein 157 (1206 aa).

Disordered stretches follow at residues 26-52, 79-109, 125-173, and 327-405; these read GGGGGSAAAAAMQEEQGEQEGPTGRDL, RAEQEHPQEGRPQQQEQGGEARQEQQGQQAP, EATC…RGPL, and GSGK…EEDW. Composition is skewed to low complexity over residues 88-109, 156-173, and 385-397; these read GRPQQQEQGGEARQEQQGQQAP, AKAVARGPRGAGTARGPL, and QQLGEQPGEQPGG. 3 coiled-coil regions span residues 634–732, 799–833, and 876–903; these read TDEL…KTKD, TEKLLNKNNKLMEENAELRRQLELSKQTEEELARR, and LHLAQLQLEEKSAEADALRERLESKTAE. Disordered stretches follow at residues 936 to 990, 1011 to 1072, and 1168 to 1206; these read TTTN…DELS, LSHG…GATS, and PWGKRSEQQPLTTTKHSGTFLRKGNGPSNNTGSRGSLKV. Composition is skewed to low complexity over residues 951 to 973 and 1014 to 1035; these read AGADAAGGSRSGSPTPPGASSSA and GPLSQSSPAPLSAGGMGSALAG. Composition is skewed to gly residues over residues 1037-1046 and 1058-1067; these read WGPGSPGGSR and SAGGMGGPQG. Composition is skewed to polar residues over residues 1175-1184 and 1193-1206; these read QQPLTTTKHS and GPSNNTGSRGSLKV.

Belongs to the CFAP157 family.

It is found in the cell projection. The protein resides in the cilium. The protein localises to the flagellum. In Chlamydomonas reinhardtii (Chlamydomonas smithii), this protein is Cilia- and flagella-associated protein 157.